An 85-amino-acid chain; its full sequence is U1-ctenitoxin-Pn1a (85 aa).

The N-terminal stretch at 1 to 16 (MKVAIVFLSLLVLAFA) is a signal peptide. Positions 17–34 (SESIEENREEFPVEESAR) are excised as a propeptide. 5 disulfides stabilise this stretch: Cys-35–Cys-49, Cys-42–Cys-55, Cys-46–Cys-81, Cys-48–Cys-65, and Cys-57–Cys-63. The propeptide occupies 82–85 (QNKI).

Belongs to the neurotoxin 03 (Tx2) family. 05 subfamily. As to expression, expressed by the venom gland.

The protein resides in the secreted. Insecticidal neurotoxin that reversibly inhibits the N-methyl-D-aspartate (NMDA)-subtype of ionotropic glutamate receptor (GRIN) and inhibits inactivation of insect sodium channels (Nav). In vivo, is highly toxic to insects. In Phoneutria nigriventer (Brazilian armed spider), this protein is U1-ctenitoxin-Pn1a.